A 717-amino-acid polypeptide reads, in one-letter code: Ribosomal RNA large subunit methyltransferase K/L (717 aa).

The 112-residue stretch at 44 to 155 (DAYKVCIYSY…KQFVNVFLCL (112 aa)) folds into the THUMP domain.

The protein belongs to the methyltransferase superfamily. RlmKL family.

It localises to the cytoplasm. The catalysed reaction is guanosine(2445) in 23S rRNA + S-adenosyl-L-methionine = N(2)-methylguanosine(2445) in 23S rRNA + S-adenosyl-L-homocysteine + H(+). The enzyme catalyses guanosine(2069) in 23S rRNA + S-adenosyl-L-methionine = N(2)-methylguanosine(2069) in 23S rRNA + S-adenosyl-L-homocysteine + H(+). Specifically methylates the guanine in position 2445 (m2G2445) and the guanine in position 2069 (m7G2069) of 23S rRNA. The protein is Ribosomal RNA large subunit methyltransferase K/L of Francisella tularensis subsp. tularensis (strain WY96-3418).